A 174-amino-acid polypeptide reads, in one-letter code: Ubiquitin-like protein 4B (174 aa).

The 76-residue stretch at 1–76 (MFLTVKLLLG…INVIMQPLEK (76 aa)) folds into the Ubiquitin-like domain. Basic and acidic residues predominate over residues 141 to 156 (EPHVEPAGERELEAKA). Residues 141-174 (EPHVEPAGERELEAKARPQSSCDMEEKEEAAADQ) are disordered. A compositionally biased stretch (acidic residues) spans 163–174 (DMEEKEEAAADQ).

It is found in the cytoplasm. The protein is Ubiquitin-like protein 4B (UBL4B) of Homo sapiens (Human).